We begin with the raw amino-acid sequence, 385 residues long: Chaperone protein DnaJ (385 aa).

A J domain is found at 3–68 (DYYEILGVTR…QKRAAYDRFG (66 aa)). A CR-type zinc finger spans residues 135 to 213 (GAEVEITVPA…CHGHGQVRRE (79 aa)). The Zn(2+) site is built by cysteine 148, cysteine 151, cysteine 165, cysteine 168, cysteine 187, cysteine 190, cysteine 201, and cysteine 204. CXXCXGXG motif repeat units lie at residues 148 to 155 (CEVCEGSG), 165 to 172 (CGTCGGAG), 187 to 194 (CPRCGGSG), and 201 to 208 (CSNCHGHG).

Belongs to the DnaJ family. As to quaternary structure, homodimer. Zn(2+) serves as cofactor.

It localises to the cytoplasm. Its function is as follows. Participates actively in the response to hyperosmotic and heat shock by preventing the aggregation of stress-denatured proteins and by disaggregating proteins, also in an autonomous, DnaK-independent fashion. Unfolded proteins bind initially to DnaJ; upon interaction with the DnaJ-bound protein, DnaK hydrolyzes its bound ATP, resulting in the formation of a stable complex. GrpE releases ADP from DnaK; ATP binding to DnaK triggers the release of the substrate protein, thus completing the reaction cycle. Several rounds of ATP-dependent interactions between DnaJ, DnaK and GrpE are required for fully efficient folding. Also involved, together with DnaK and GrpE, in the DNA replication of plasmids through activation of initiation proteins. This is Chaperone protein DnaJ from Caulobacter vibrioides (strain ATCC 19089 / CIP 103742 / CB 15) (Caulobacter crescentus).